The following is a 507-amino-acid chain: Maturase K (507 aa).

Belongs to the intron maturase 2 family. MatK subfamily.

The protein localises to the plastid. It is found in the chloroplast. Usually encoded in the trnK tRNA gene intron. Probably assists in splicing its own and other chloroplast group II introns. The sequence is that of Maturase K from Liriodendron chinense (Chinese tulip tree).